Reading from the N-terminus, the 318-residue chain is Protease HtpX homolog (318 aa).

The next 3 membrane-spanning stretches (helical) occupy residues 1-21, 35-55, and 56-76; these read MLEAAGAVLLGSAALLMVGRL, ILGLLVGILSLALAALTGSAI, and AGLVVGVITAAMMYLFSSRIV. His-167 is a binding site for Zn(2+). Residue Glu-168 is part of the active site. His-171 lines the Zn(2+) pocket. Helical transmembrane passes span 178–198 and 209–229; these read LVMTVAAAVSTAIAYAFDPWL and IAFLVLAGMLASLISTLLVAA. Position 235 (Glu-235) interacts with Zn(2+).

The protein belongs to the peptidase M48B family. Zn(2+) serves as cofactor.

The protein resides in the cell membrane. The protein is Protease HtpX homolog of Methanopyrus kandleri (strain AV19 / DSM 6324 / JCM 9639 / NBRC 100938).